The following is a 218-amino-acid chain: UPF0173 metal-dependent hydrolase Mpal_1063 (218 aa).

This sequence belongs to the UPF0173 family.

The sequence is that of UPF0173 metal-dependent hydrolase Mpal_1063 from Methanosphaerula palustris (strain ATCC BAA-1556 / DSM 19958 / E1-9c).